The sequence spans 70 residues: Protein tam14 (70 aa).

Polar residues predominate over residues 1–19 (MPTVQTPSQRRANTQFQKN). Positions 1–20 (MPTVQTPSQRRANTQFQKNI) are disordered. A helical membrane pass occupies residues 45–65 (IAMFFILLMSGGIILGILRFL).

The protein belongs to the RAMP4 family.

It is found in the membrane. The protein localises to the endoplasmic reticulum membrane. Its function is as follows. Interacts with target proteins during their translocation into the lumen of the endoplasmic reticulum. Protects unfolded target proteins against degradation during ER stress. May facilitate glycosylation of target proteins after termination of ER stress. This Schizosaccharomyces pombe (strain 972 / ATCC 24843) (Fission yeast) protein is Protein tam14 (tam14).